An 812-amino-acid chain; its full sequence is Probable E3 ubiquitin-protein ligase hulA (812 aa).

One can recognise a C2 domain in the interval 1–109 (MTCSQPNLRV…QMGGDEMLTR (109 aa)). 2 disordered regions span residues 131 to 235 (NLST…WERR) and 250 to 350 (RTTT…YFVD). Composition is skewed to polar residues over residues 148–165 (MQPSTSSGLVPQVSASTP), 174–199 (ADPTASNPSLHPQRVPSTTRPSSTIV), 214–223 (SRTNLSSFED), and 250–267 (RTTTWTRPSNNYNEQTSR). Positions 226 to 259 (GRLPAGWERREDNLGRTYYVDHNTRTTTWTRPSN) constitute a WW 1 domain. Residues 276–291 (LERRAHQSRMLPEDRT) are compositionally biased toward basic and acidic residues. Over residues 292 to 306 (GASSPNLQENQQQAQ) the composition is skewed to polar residues. The segment covering 307–330 (TPPAGGSASAVSMMATGATTAGTG) has biased composition (low complexity). WW domains are found at residues 330–363 (GELPPGWEQRTTPEGRPYFVDHNTRTTTWVDPRR) and 390–423 (GPLPSGWEMRLTNTARVYFVDHNTKTTTWDDPRL). In terms of domain architecture, HECT spans 479–812 (SASDLKKRLM…VEETLGFGQE (334 aa)). Cysteine 780 serves as the catalytic Glycyl thioester intermediate.

This sequence belongs to the RSP5/NEDD4 family. In terms of assembly, interacts with creD.

It is found in the cytoplasm. The catalysed reaction is S-ubiquitinyl-[E2 ubiquitin-conjugating enzyme]-L-cysteine + [acceptor protein]-L-lysine = [E2 ubiquitin-conjugating enzyme]-L-cysteine + N(6)-ubiquitinyl-[acceptor protein]-L-lysine.. Its pathway is protein modification; protein ubiquitination. E3 ubiquitin-protein ligase which accepts ubiquitin from an E2 ubiquitin-conjugating enzyme in the form of a thioester and then directly transfers the ubiquitin to targeted substrates. Probably involved in the regulatory network controlling carbon source utilization. This is Probable E3 ubiquitin-protein ligase hulA (hulA) from Aspergillus flavus (strain ATCC 200026 / FGSC A1120 / IAM 13836 / NRRL 3357 / JCM 12722 / SRRC 167).